A 196-amino-acid chain; its full sequence is UPF0301 protein BT_1078 (196 aa).

Belongs to the UPF0301 (AlgH) family.

This is UPF0301 protein BT_1078 from Bacteroides thetaiotaomicron (strain ATCC 29148 / DSM 2079 / JCM 5827 / CCUG 10774 / NCTC 10582 / VPI-5482 / E50).